We begin with the raw amino-acid sequence, 506 residues long: GTPase Der (506 aa).

EngA-type G domains are found at residues 3–166 and 218–391; these read PVVA…GEQL and IKIA…ACAT. GTP-binding positions include 9-16, 56-60, 118-121, 224-231, 271-275, and 336-339; these read GRPNVGKS, DTGGI, NKTD, DTAGV, and NKWD. The 85-residue stretch at 392-476 folds into the KH-like domain; that stretch reads QKNSTSMLTR…PIRIQFQEGN (85 aa).

This sequence belongs to the TRAFAC class TrmE-Era-EngA-EngB-Septin-like GTPase superfamily. EngA (Der) GTPase family. Associates with the 50S ribosomal subunit.

In terms of biological role, GTPase that plays an essential role in the late steps of ribosome biogenesis. The protein is GTPase Der of Actinobacillus pleuropneumoniae serotype 7 (strain AP76).